We begin with the raw amino-acid sequence, 184 residues long: Endoribonuclease YbeY (184 aa).

Acidic residues-rich tracts occupy residues 1–11 (MTVEVGADENP) and 19–29 (DGAGDESDDED). The disordered stretch occupies residues 1–38 (MTVEVGADENPDFAHDETDGAGDESDDEDAQGRDPELD). Residues His-146, His-150, and His-156 each contribute to the Zn(2+) site.

It belongs to the endoribonuclease YbeY family. The cofactor is Zn(2+).

It localises to the cytoplasm. Its function is as follows. Single strand-specific metallo-endoribonuclease involved in late-stage 70S ribosome quality control and in maturation of the 3' terminus of the 16S rRNA. The protein is Endoribonuclease YbeY of Burkholderia pseudomallei (strain K96243).